Reading from the N-terminus, the 673-residue chain is Estrogen receptor beta (673 aa).

Residues Met-1 to Phe-181 are modulating. 2 consecutive NR C4-type zinc fingers follow at residues Cys-182–Cys-202 and Cys-218–Cys-242. Positions Cys-182–Met-247 form a DNA-binding region, nuclear receptor. The 237-residue stretch at Ser-316 to Asn-552 folds into the NR LBD domain. The segment at Thr-553–Thr-602 is disordered. The span at Ser-554–Ser-566 shows a compositional bias: low complexity.

This sequence belongs to the nuclear hormone receptor family. NR3 subfamily. As to quaternary structure, binds DNA as a homodimer. Can form a heterodimer with ER-alpha. In terms of tissue distribution, abundant in the liver and testes, less abundant in the ovary and barely detectable in the muscle.

It localises to the nucleus. In terms of biological role, binds estrogens with an affinity similar to that of ER-alpha, and activates expression of reporter genes containing estrogen response elements (ERE) in an estrogen-dependent manner. This is Estrogen receptor beta (esr2) from Micropogonias undulatus (Atlantic croaker).